A 977-amino-acid chain; its full sequence is Leucine--tRNA ligase (977 aa).

A 'HIGH' region motif is present at residues 11-21 (PYVNGYLHLGH). The tract at residues 220 to 318 (VFYVYELYSL…EYYNTKVETQ (99 aa)) is insert. The short motif at 699 to 703 (KMSKS) is the 'KMSKS' region element. Position 702 (Lys702) interacts with ATP.

The protein belongs to the class-I aminoacyl-tRNA synthetase family.

The protein resides in the cytoplasm. The enzyme catalyses tRNA(Leu) + L-leucine + ATP = L-leucyl-tRNA(Leu) + AMP + diphosphate. In Nanoarchaeum equitans (strain Kin4-M), this protein is Leucine--tRNA ligase (leuS).